Here is a 633-residue protein sequence, read N- to C-terminus: Membrane protein insertase YidC (633 aa).

Transmembrane regions (helical) follow at residues 3-23 (KNTLIGFLLIGVVLFAFSWFN), 377-397 (FIHNYGILILLMTIIVKIILF), 453-473 (LPMLLQMPILIALFMFFPSAI), 499-519 (IPIITPYFGNHISLFCLLMTI), 541-561 (GMKAMMYMMPLMFLVFFNQYA), and 562-582 (SGLTYYYFISTLITIVQTLIF). Residues 612–633 (LEEAQRAQQETLRKQQEAKKKR) are disordered.

The protein belongs to the OXA1/ALB3/YidC family. Type 1 subfamily. In terms of assembly, interacts with the Sec translocase complex via SecD. Specifically interacts with transmembrane segments of nascent integral membrane proteins during membrane integration.

Its subcellular location is the cell inner membrane. Required for the insertion and/or proper folding and/or complex formation of integral membrane proteins into the membrane. Involved in integration of membrane proteins that insert both dependently and independently of the Sec translocase complex, as well as at least some lipoproteins. Aids folding of multispanning membrane proteins. In Parabacteroides distasonis (strain ATCC 8503 / DSM 20701 / CIP 104284 / JCM 5825 / NCTC 11152), this protein is Membrane protein insertase YidC.